The primary structure comprises 230 residues: Androgen-dependent TFPI-regulating protein (230 aa).

The Cytoplasmic portion of the chain corresponds to 1-7 (MTKTTTC). Residues 8-28 (VYHFLVLNWYIFLNYHIPQIG) traverse the membrane as a helical segment. Over 29-45 (RNEEKLREFHDGGRSKY) the chain is Extracellular. Residues 46-66 (LTLLNLLLQAIFFGVACLDDV) form a helical membrane-spanning segment. Topologically, residues 67-85 (LKRVIGRKDIKFVTSFRDL) are cytoplasmic. The chain crosses the membrane as a helical span at residues 86 to 106 (LFTTMAFPISTFVFLVFWTLF). The Extracellular portion of the chain corresponds to 107–120 (HYDRSLVYPKGLDD). Residues 121–141 (FFPAWVNHAMHTSIFPFSLFE) form a helical membrane-spanning segment. The Cytoplasmic segment spans residues 142–154 (TILRPHNYPSKKL). Residues 155 to 175 (GLTLLGAFNFAYIIRILWRYV) traverse the membrane as a helical segment. Residues 176–190 (QTGNWVYPVFDSLSP) lie on the Extracellular side of the membrane. Residues 191-211 (LGIIIFFSAAYILVAGIYLFG) form a helical membrane-spanning segment. At 212–230 (EKINHWKWGAIAKPQMKKN) the chain is on the cytoplasmic side.

Belongs to the AIG1 family.

It localises to the cell membrane. The catalysed reaction is 9-hexadecanoyloxy-octadecanoate + H2O = 9-hydroxy-octadecanoate + hexadecanoate + H(+). It catalyses the reaction 12-hexadecanoyloxy-octadecanoate + H2O = 12-hydroxyoctadecanoate + hexadecanoate + H(+). The enzyme catalyses 9-(9Z-hexadecenoyloxy)-octadecanoate + H2O = (9Z)-hexadecenoate + 9-hydroxy-octadecanoate + H(+). It carries out the reaction 12-(9Z-hexadecenoyloxy)-octadecanoate + H2O = 12-hydroxyoctadecanoate + (9Z)-hexadecenoate + H(+). The catalysed reaction is 13-(9Z-hexadecenoyloxy)-octadecanoate + H2O = 13-hydroxy-octadecanoate + (9Z)-hexadecenoate + H(+). It catalyses the reaction 9-octadecanoyloxy-octadecanoate + H2O = 9-hydroxy-octadecanoate + octadecanoate + H(+). The enzyme catalyses 12-octadecanoyloxy-octadecanoate + H2O = 12-hydroxyoctadecanoate + octadecanoate + H(+). It carries out the reaction 13-octadecanoyloxy-octadecanoate + H2O = 13-hydroxy-octadecanoate + octadecanoate + H(+). The catalysed reaction is 9-(9Z-octadecenoyloxy)-octadecanoate + H2O = 9-hydroxy-octadecanoate + (9Z)-octadecenoate + H(+). It catalyses the reaction 12-(9Z-octadecenoyloxy)-octadecanoate + H2O = 12-hydroxyoctadecanoate + (9Z)-octadecenoate + H(+). The enzyme catalyses 13-(9Z-octadecenoyloxy)-octadecanoate + H2O = 13-hydroxy-octadecanoate + (9Z)-octadecenoate + H(+). It carries out the reaction 5-(9Z-octadecenoyloxy)-octadecanoate + H2O = 5-hydroxy-octadecanoate + (9Z)-octadecenoate + H(+). Its function is as follows. Hydrolyzes bioactive fatty-acid esters of hydroxy-fatty acids (FAHFAs), but not other major classes of lipids. Shows a preference for FAHFAs with branching distal from the carboxylate head group of the lipids. Regulates the expression and the cell-associated anticoagulant activity of the inhibitor TFPI in endothelial cells (in vitro). The sequence is that of Androgen-dependent TFPI-regulating protein (Adtrp) from Mus musculus (Mouse).